The sequence spans 755 residues: 17S U2 SnRNP complex component HTATSF1 (755 aa).

2 disordered regions span residues 1-53 (MSGT…YEWD) and 81-122 (GASS…KAES). Residue Ser-2 is modified to N-acetylserine. Residues 90-122 (EDVHARTAEEPPQEKAPEPTDARKKGEKRKAES) are compositionally biased toward basic and acidic residues. 2 consecutive RRM domains span residues 133 to 218 (TNVY…VAKF) and 264 to 349 (RVVI…AWDG). The interval 259 to 353 (RMRHERVVII…AQAWDGTTDY (95 aa)) is U2AF homology motif (UHM). At Lys-297 the chain carries N6-acetyllysine. The interval 380–415 (RGLRRSDSVSASERAGPSRARHFSEHPSTSKMNAQE) is disordered. A mediates interaction with the P-TEFb complex region spans residues 381–755 (GLRRSDSVSA…LSSDDDDDDI (375 aa)). Ser-387, Ser-403, Ser-407, and Ser-409 each carry phosphoserine. Over residues 405 to 415 (HPSTSKMNAQE) the composition is skewed to polar residues. Residues Lys-429 and Lys-430 each participate in a glycyl lysine isopeptide (Lys-Gly) (interchain with G-Cter in SUMO2) cross-link. The interval 433 to 755 (KTEDGGEFEE…LSSDDDDDDI (323 aa)) is disordered. 3 positions are modified to phosphoserine: Ser-445, Ser-452, and Ser-453. Over residues 462-476 (CPEKESEEGCPKRGF) the composition is skewed to basic and acidic residues. Ser-481, Ser-485, Ser-494, Ser-498, Ser-521, and Ser-529 each carry phosphoserine. The segment covering 508–538 (LKNDCEENGLAKESEDDLNKESEEEVGPTKE) has biased composition (basic and acidic residues). Residues 539-552 (SEEDDSEKESDEDC) are compositionally biased toward acidic residues. Residues 553 to 563 (SEKQSEDGSER) show a composition bias toward basic and acidic residues. A phosphoserine mark is found at Ser-557, Ser-561, and Ser-579. Positions 564–579 (EFEENGLEKDLDEEGS) are enriched in acidic residues. A compositionally biased stretch (basic and acidic residues) spans 580–590 (EKELHENVLDK). A compositionally biased stretch (acidic residues) spans 591–606 (ELEENDSENSEFEDDG). Residues Ser-597, Ser-600, Ser-607, Ser-616, and Ser-624 each carry the phosphoserine modification. 2 stretches are compositionally biased toward acidic residues: residues 613–633 (EEGS…EEDT) and 640–651 (DESDEKEDEEYA). Thr-633 bears the Phosphothreonine mark. Ser-642 carries the phosphoserine modification. Basic and acidic residues predominate over residues 652–674 (DEKGLEAADKKAEEGDADEKLFE). Acidic residues predominate over residues 675 to 713 (ESDDKEDEDADGKEVEDADEKLFEDDDSNEKLFDEEEDS). Residues Ser-676, Ser-702, Ser-713, Ser-714, and Ser-721 each carry the phosphoserine modification. Over residues 714-725 (SEKLFDDSDERG) the composition is skewed to basic and acidic residues. Ser-748 bears the Phosphoserine; by CK2 mark.

Belongs to the HTATSF1 family. As to quaternary structure, component of the 17S U2 SnRNP complex, a ribonucleoprotein complex that contains small nuclear RNA (snRNA) U2 and a number of specific proteins. Within the 17S U2 SnRNP complex, interacts (via UHM region) directly with SF3B1. Component of a complex which is at least composed of HTATSF1/Tat-SF1, the P-TEFb complex components CDK9 and CCNT1, RNA polymerase II, SUPT5H, and NCL/nucleolin. Interacts with GTF2F2/RAP30 and POLR2A. Interacts with TCERG1/CA150. Interacts with (poly-ADP-ribosylated) RPA1; promoting HTATSF1 recruitment to DNA damage sites. Interacts (when phosphorylated) with TOPBP1; promoting recruitment of TOPBP1 to DNA damage sites during S-phase. Post-translationally, phosphorylation at Ser-748 by CK2 during S-phase in response to DNA damage promotes interaction with TOPBP1 and double-strand break (DSB) repair via homologous recombination. In terms of tissue distribution, widely expressed.

The protein localises to the nucleus. The protein resides in the chromosome. Component of the 17S U2 SnRNP complex of the spliceosome, a large ribonucleoprotein complex that removes introns from transcribed pre-mRNAs. The 17S U2 SnRNP complex (1) directly participates in early spliceosome assembly and (2) mediates recognition of the intron branch site during pre-mRNA splicing by promoting the selection of the pre-mRNA branch-site adenosine, the nucleophile for the first step of splicing. Within the 17S U2 SnRNP complex, HTATSF1 is required to stabilize the branchpoint-interacting stem loop. HTATSF1 is displaced from the 17S U2 SnRNP complex before the stable addition of the 17S U2 SnRNP complex to the spliceosome, destabilizing the branchpoint-interacting stem loop and allowing to probe intron branch site sequences. Also acts as a regulator of transcriptional elongation, possibly by mediating the reciprocal stimulatory effect of splicing on transcriptional elongation. Involved in double-strand break (DSB) repair via homologous recombination in S-phase by promoting the recruitment of TOPBP1 to DNA damage sites. Mechanistically, HTATSF1 is (1) recruited to DNA damage sites in S-phase via interaction with poly-ADP-ribosylated RPA1 and (2) phosphorylated by CK2, promoting recruitment of TOPBP1, thereby facilitating RAD51 nucleofilaments formation and RPA displacement, followed by homologous recombination. Functionally, (Microbial infection) In case of infection by HIV-1, it is up-regulated by the HIV-1 proteins NEF and gp120, acts as a cofactor required for the Tat-enhanced transcription of the virus. This chain is 17S U2 SnRNP complex component HTATSF1, found in Homo sapiens (Human).